The following is a 394-amino-acid chain: MISYLASIFLLATVSAVPSGRVEVVFPSVETSRSGVKTVKFTALDQNVELKLRSAGEILGKHFAIQDVDVESLRRKIYRDSVNGAALLIDEDGPLTIEGIVNSKLRIQPFESGRIIKDGMIAHQIVEVIDDKKSYDRVAVIHENVKRNAENVSRMAEENDCIVVEYYIVTDSAFTKRFKSNSALTNYVTVMFTGVQNLMDTLELGIGVRLLGVTAFNEETEPSFIKDNLIPGPPEAFEPDVLITAMSQYYCNHQTGLAKDTDLIFLITARGMGDPREDGTVDINTAGIANSAGVCKPCLKAGIATDDSNYNERVDTLAHESVHLLGSPHDGEGPDQVSVEGSPGAANCPAKAGYIMGNRKDPNKYKFSPCTKKCVEYLLSKPTAFCIFEQCSDF.

The N-terminal stretch at 1–16 (MISYLASIFLLATVSA) is a signal peptide. Positions 17 to 158 (VPSGRVEVVF…AENVSRMAEE (142 aa)) are excised as a propeptide. The N-linked (GlcNAc...) asparagine glycan is linked to Asn-151. Residues 162-390 (IVVEYYIVTD…KPTAFCIFEQ (229 aa)) enclose the Peptidase M12B domain. Cys-295 and Cys-386 are disulfide-bonded. Zn(2+) is bound at residue His-319. Residue Glu-320 is part of the active site. Zn(2+) contacts are provided by His-323 and His-329.

It belongs to the venom metalloproteinase (M12B) family. The cofactor is Zn(2+). In terms of tissue distribution, expressed by the venom gland.

It is found in the secreted. Its activity is regulated as follows. Inhibited by EDTA. Acts as a metalloprotease. Penetrates intact tissue and specifically cleaves the vesicle-associated membrane protein 2 (VAMP2) (part of the SNARE complex) involved in pancreatic secretion, thus disrupting the normal vesicular traffic. The chain is Venom metalloproteinase antarease-like TtrivMP_A from Tityus trivittatus (Argentinean scorpion).